Reading from the N-terminus, the 295-residue chain is 33 kDa chaperonin (295 aa).

2 disulfides stabilise this stretch: C237–C239 and C270–C273.

The protein belongs to the HSP33 family. Post-translationally, under oxidizing conditions two disulfide bonds are formed involving the reactive cysteines. Under reducing conditions zinc is bound to the reactive cysteines and the protein is inactive.

The protein localises to the cytoplasm. Redox regulated molecular chaperone. Protects both thermally unfolding and oxidatively damaged proteins from irreversible aggregation. Plays an important role in the bacterial defense system toward oxidative stress. This is 33 kDa chaperonin from Shouchella clausii (strain KSM-K16) (Alkalihalobacillus clausii).